The sequence spans 37 residues: Photosystem I reaction center subunit VIII (37 aa).

The helical transmembrane segment at 9-29 threads the bilayer; sequence SIFVPLVGLVFPAIAMASLFL.

This sequence belongs to the PsaI family.

The protein resides in the plastid. It is found in the chloroplast thylakoid membrane. Functionally, may help in the organization of the PsaL subunit. This chain is Photosystem I reaction center subunit VIII, found in Cucumis sativus (Cucumber).